Reading from the N-terminus, the 148-residue chain is 3-hydroxyacyl-[acyl-carrier-protein] dehydratase FabZ (148 aa).

H50 is an active-site residue.

This sequence belongs to the thioester dehydratase family. FabZ subfamily.

It is found in the cytoplasm. It carries out the reaction a (3R)-hydroxyacyl-[ACP] = a (2E)-enoyl-[ACP] + H2O. Involved in unsaturated fatty acids biosynthesis. Catalyzes the dehydration of short chain beta-hydroxyacyl-ACPs and long chain saturated and unsaturated beta-hydroxyacyl-ACPs. The polypeptide is 3-hydroxyacyl-[acyl-carrier-protein] dehydratase FabZ (Lactobacillus helveticus (strain DPC 4571)).